The sequence spans 782 residues: E3 ubiquitin-protein ligase SopA (782 aa).

The segment at 137–171 is disordered; the sequence is VSVSANNRPTVSEGRTPPVSPSLSLQATSSPSSPA. Over residues 157-171 the composition is skewed to low complexity; the sequence is PSLSLQATSSPSSPA. Catalysis depends on cysteine 753, which acts as the Glycyl thioester intermediate.

The protein belongs to the SopA E3 ligase family. Post-translationally, ubiquitinated in the presence of host E1 ubiquitin-activating enzyme, E2 ubiquitin-conjugating enzyme and ubiquitin.

It is found in the secreted. The protein localises to the host mitochondrion. The catalysed reaction is S-ubiquitinyl-[E2 ubiquitin-conjugating enzyme]-L-cysteine + [acceptor protein]-L-lysine = [E2 ubiquitin-conjugating enzyme]-L-cysteine + N(6)-ubiquitinyl-[acceptor protein]-L-lysine.. Its function is as follows. Effector proteins function to alter host cell physiology and promote bacterial survival in host tissues. This protein is an E3 ubiquitin ligase that interferes with host's ubiquitination pathway. Required for inducing polymorphonuclear leukocytes migration across the intestinal epithelium. The polypeptide is E3 ubiquitin-protein ligase SopA (sopA) (Salmonella dublin).